The sequence spans 349 residues: 5-deoxyribose 1-phosphate isomerase (349 aa).

Substrate-binding positions include 49-51 (RGA), Arg-92, and Gln-199. The Proton donor role is filled by Asp-240. Residue 250–251 (NK) coordinates substrate.

Belongs to the EIF-2B alpha/beta/delta subunits family. DrdI subfamily.

The enzyme catalyses 5-deoxy-alpha-D-ribose 1-phosphate = 5-deoxy-D-ribulose 1-phosphate. Its pathway is carbohydrate degradation. In terms of biological role, catalyzes the isomerization of 5-deoxy-alpha-D-ribose 1-phosphate to 5-deoxy-D-ribulose 1-phosphate, as part of a 5-deoxyribose salvage pathway that recycles this toxic radical SAM enzyme by-product to mainstream metabolites. The sequence is that of 5-deoxyribose 1-phosphate isomerase from Clostridium botulinum (strain Loch Maree / Type A3).